The primary structure comprises 178 residues: MSRIGNKVITLPAGVEIINKDNVVTVKGPKGQLTREFNKNIGITVEGTEVTVTRPNDSKEMKTIHGTTRANLNNMVVGVSEGFKKALEMRGVGYRAQLQGSKLVLSVGKSHQDEVEAPEGVTFEVPTPTTINVIGINKESVGQTAAYVRSLRSPEPYKGKGIRYVGEFVRRKEGKTGK.

It belongs to the universal ribosomal protein uL6 family. As to quaternary structure, part of the 50S ribosomal subunit.

Functionally, this protein binds to the 23S rRNA, and is important in its secondary structure. It is located near the subunit interface in the base of the L7/L12 stalk, and near the tRNA binding site of the peptidyltransferase center. In Streptococcus agalactiae serotype V (strain ATCC BAA-611 / 2603 V/R), this protein is Large ribosomal subunit protein uL6.